We begin with the raw amino-acid sequence, 525 residues long: Glutamate--cysteine ligase (525 aa).

It belongs to the glutamate--cysteine ligase type 1 family. Type 1 subfamily.

It carries out the reaction L-cysteine + L-glutamate + ATP = gamma-L-glutamyl-L-cysteine + ADP + phosphate + H(+). Its pathway is sulfur metabolism; glutathione biosynthesis; glutathione from L-cysteine and L-glutamate: step 1/2. The protein is Glutamate--cysteine ligase of Vibrio vulnificus (strain YJ016).